We begin with the raw amino-acid sequence, 176 residues long: MSDLVNKKFPAGDYKFQYIAISQSDADSESCKMPQTVEWSKLISENKKVIITGAPAAFSPTCTVSHIPGYINYLDELVKEKEVDQVIVVTVDNPFANQAWAKSLGVKDTTHIKFASDPGCAFTKSIGFELAVGDGVYWSGRWAMVVENGIVTYAAKETNPGTDVTVSSVESVLAHL.

An N-acetylserine modification is found at Ser-2. The Thioredoxin domain occupies 9–176; sequence FPAGDYKFQY…SSVESVLAHL (168 aa). Ser-28 is subject to Phosphoserine. Lys-32 is covalently cross-linked (Glycyl lysine isopeptide (Lys-Gly) (interchain with G-Cter in URM1)). A Glycyl lysine isopeptide (Lys-Gly) (interchain with G-Cter in ubiquitin); alternate cross-link involves residue Lys-48. Lys-48 participates in a covalent cross-link: Glycyl lysine isopeptide (Lys-Gly) (interchain with G-Cter in URM1); alternate. Ser-59 carries the phosphoserine modification. The active-site Cysteine sulfenic acid (-SOH) intermediate is the Cys-62. Cys-62 carries the post-translational modification Cysteine persulfide. Residue Lys-79 forms a Glycyl lysine isopeptide (Lys-Gly) (interchain with G-Cter in URM1) linkage. Residue Lys-81 forms a Glycyl lysine isopeptide (Lys-Gly) (interchain with G-Cter in ubiquitin); alternate linkage. Lys-81 participates in a covalent cross-link: Glycyl lysine isopeptide (Lys-Gly) (interchain with G-Cter in URM1); alternate. Lys-107 is covalently cross-linked (Glycyl lysine isopeptide (Lys-Gly) (interchain with G-Cter in URM1)). Lys-113 participates in a covalent cross-link: Glycyl lysine isopeptide (Lys-Gly) (interchain with G-Cter in ubiquitin). Ser-116 is modified (phosphoserine). Cys-120 carries the post-translational modification Cysteine persulfide. Lys-124 participates in a covalent cross-link: Glycyl lysine isopeptide (Lys-Gly) (interchain with G-Cter in URM1). A Glycyl lysine isopeptide (Lys-Gly) (interchain with G-Cter in URM1); alternate cross-link involves residue Lys-156. Residue Lys-156 forms a Glycyl lysine isopeptide (Lys-Gly) (interchain with G-Cter in SUMO); alternate linkage.

This sequence belongs to the peroxiredoxin family. Prx5 subfamily. As to quaternary structure, homodimer; disulfide-linked, upon oxidation. Conjugated to URM1, a ubiquitin-like protein, in response to oxidative stresses. The attachment of URM1 to lysine residues exclusively depends on the presence of a peroxidatic cysteine in the target protein, with low specificity for the particular residue, motif, or structural context at which urmylation can occur. The URM1-conjugation reaction is mechanistically and directly coupled to the process of cysteine persulfidation, transfering the sulfur atom of the URM1 thiocarboxyl group to redox-active cysteine residues in the target protein if it is exposed to oxidative conditions. In terms of processing, persulfidated on specific redox-active cysteine residues. Persulfidation (also called protein S-sulfhydration) may provide a molecular mechanism that enables cells to protect vulnerable cysteine residues from reactive oxygen species (ROS) under stress conditions.

Its subcellular location is the cytoplasm. It carries out the reaction a hydroperoxide + [thioredoxin]-dithiol = an alcohol + [thioredoxin]-disulfide + H2O. Functionally, thiol-specific peroxidase that catalyzes the reduction of hydrogen peroxide and organic hydroperoxides to water and alcohols, respectively. Plays a role in cell protection against oxidative stress by detoxifying peroxides and as sensor of hydrogen peroxide-mediated signaling events. Preferentially eliminates organic peroxides rather than hydrogen peroxide. Relays alkyl hydroperoxides as a signal to the transcription factor CAD1/YAP2 by inducing the formation of intramolecular disulfide bonds in CAD1, which causes its nuclear accumulation and activation. Involved in cellular Mn(2+) homeostasis. This Saccharomyces cerevisiae (strain ATCC 204508 / S288c) (Baker's yeast) protein is Peroxiredoxin AHP1.